We begin with the raw amino-acid sequence, 176 residues long: Large ribosomal subunit protein eL6A (176 aa).

Residue Ser-2 is modified to N-acetylserine. Position 12 is a phosphoserine (Ser-12). A Glycyl lysine isopeptide (Lys-Gly) (interchain with G-Cter in ubiquitin) cross-link involves residue Lys-128.

The protein belongs to the eukaryotic ribosomal protein eL6 family. Component of the large ribosomal subunit (LSU). Mature yeast ribosomes consist of a small (40S) and a large (60S) subunit. The 40S small subunit contains 1 molecule of ribosomal RNA (18S rRNA) and 33 different proteins (encoded by 57 genes). The large 60S subunit contains 3 rRNA molecules (25S, 5.8S and 5S rRNA) and 46 different proteins (encoded by 81 genes). N-terminally acetylated by acetyltransferase NatA.

The protein resides in the cytoplasm. In terms of biological role, component of the ribosome, a large ribonucleoprotein complex responsible for the synthesis of proteins in the cell. The small ribosomal subunit (SSU) binds messenger RNAs (mRNAs) and translates the encoded message by selecting cognate aminoacyl-transfer RNA (tRNA) molecules. The large subunit (LSU) contains the ribosomal catalytic site termed the peptidyl transferase center (PTC), which catalyzes the formation of peptide bonds, thereby polymerizing the amino acids delivered by tRNAs into a polypeptide chain. The nascent polypeptides leave the ribosome through a tunnel in the LSU and interact with protein factors that function in enzymatic processing, targeting, and the membrane insertion of nascent chains at the exit of the ribosomal tunnel. This Saccharomyces cerevisiae (strain ATCC 204508 / S288c) (Baker's yeast) protein is Large ribosomal subunit protein eL6A.